A 139-amino-acid polypeptide reads, in one-letter code: Protein cornichon homolog 4 (139 aa).

3 helical membrane passes run 5–25, 57–77, and 118–138; these read VFVFSLLDCCALIFLSVYFII, LVTVLMLISLHWFIFLLNLPV, and LGFHLLCFFMYLYSMILALIN.

It belongs to the cornichon family. In terms of assembly, interacts with Sec23/24 complex components SEC24B and SEC24D. Interacts with CCR5. Interacts with ADRB2 in the early secretory pathway.

It is found in the membrane. It localises to the endoplasmic reticulum. Its subcellular location is the endoplasmic reticulum-Golgi intermediate compartment. Involved in G protein-coupled receptors (GPCRs) trafficking from the endoplasmic reticulum to the cell surface; it promotes the exit of GPCRs from the early secretory pathway, likely through interaction with the COPII machinery. This Bos taurus (Bovine) protein is Protein cornichon homolog 4 (CNIH4).